A 786-amino-acid chain; its full sequence is Wall-associated receptor kinase-like 17 (786 aa).

Positions 1-30 (MSYKNTNNSHLILFKLLLLLILYSADLTAS) are cleaved as a signal peptide. The Extracellular portion of the chain corresponds to 31–369 (SSCRSECGGC…YRCVGDKTKA (339 aa)). 5 N-linked (GlcNAc...) asparagine glycosylation sites follow: Asn69, Asn122, Asn160, Asn165, and Asn274. Positions 301–362 (CICDYTMSII…CVNFEGGYRC (62 aa)) are atypical EGF-like. Disulfide bonds link Cys303–Cys318, Cys340–Cys353, and Cys347–Cys362. Residues 370-390 (IMIGAGTGFGVLVLVGGVWWL) form a helical membrane-spanning segment. At 391–786 (RKFLVKRRMA…VEPLNPLLTW (396 aa)) the chain is on the cytoplasmic side. Position 433 is a phosphothreonine (Thr433). The region spanning 444–719 (FSENRVLGHG…REVFTELERI (276 aa)) is the Protein kinase domain. ATP-binding positions include 450–458 (LGHGGQGTV) and Lys472. Tyr517 bears the Phosphotyrosine mark. Asp570 (proton acceptor) is an active-site residue. A phosphothreonine mark is found at Thr604 and Thr609. Residue Tyr617 is modified to Phosphotyrosine. Positions 766–775 (SSIVASPPSS) are enriched in low complexity. A disordered region spans residues 766–786 (SSIVASPPSSDVEPLNPLLTW).

Belongs to the protein kinase superfamily. Ser/Thr protein kinase family.

Its subcellular location is the membrane. It catalyses the reaction L-seryl-[protein] + ATP = O-phospho-L-seryl-[protein] + ADP + H(+). It carries out the reaction L-threonyl-[protein] + ATP = O-phospho-L-threonyl-[protein] + ADP + H(+). Functionally, serine/threonine-protein kinase that may function as a signaling receptor of extracellular matrix component. The polypeptide is Wall-associated receptor kinase-like 17 (WAKL17) (Arabidopsis thaliana (Mouse-ear cress)).